Here is a 404-residue protein sequence, read N- to C-terminus: S-adenosylmethionine synthase (404 aa).

His18 contacts ATP. A Mg(2+)-binding site is contributed by Asp20. Glu46 is a binding site for K(+). The L-methionine site is built by Glu59 and Gln102. The segment at 102–112 (QSPDIAQGVDT) is flexible loop. ATP contacts are provided by residues 177–179 (DGK), 249–250 (KF), Asp258, 264–265 (RK), Ala281, and Lys285. L-methionine is bound at residue Asp258. Lys289 is a binding site for L-methionine.

Belongs to the AdoMet synthase family. Homotetramer; dimer of dimers. Mg(2+) is required as a cofactor. Requires K(+) as cofactor.

The protein localises to the cytoplasm. The enzyme catalyses L-methionine + ATP + H2O = S-adenosyl-L-methionine + phosphate + diphosphate. It functions in the pathway amino-acid biosynthesis; S-adenosyl-L-methionine biosynthesis; S-adenosyl-L-methionine from L-methionine: step 1/1. In terms of biological role, catalyzes the formation of S-adenosylmethionine (AdoMet) from methionine and ATP. The overall synthetic reaction is composed of two sequential steps, AdoMet formation and the subsequent tripolyphosphate hydrolysis which occurs prior to release of AdoMet from the enzyme. The polypeptide is S-adenosylmethionine synthase (Nocardia farcinica (strain IFM 10152)).